The following is a 473-amino-acid chain: uncharacterized protein (473 aa).

The tract at residues 1–86 (MSSSPTESEI…NTSNYGSSRD (86 aa)) is disordered. Basic and acidic residues predominate over residues 10–19 (ILPKESHNSI). Polar residues-rich tracts occupy residues 20–39 (DEQS…NSFN) and 55–68 (EPVQ…PNMA). Serine 64 carries the post-translational modification Phosphoserine. The span at 69-83 (SNESGNSENTSNYGS) shows a compositional bias: low complexity. 3 consecutive RRM domains span residues 95–165 (LWMG…NHLF), 188–260 (IFVG…PIRV), and 305–370 (VFVG…RIRL). The interval 448 to 473 (MHIPENGNSDTMPVPNTQGKHLSAEE) is disordered. Over residues 453–467 (NGNSDTMPVPNTQGK) the composition is skewed to polar residues.

This is an uncharacterized protein from Schizosaccharomyces pombe (strain 972 / ATCC 24843) (Fission yeast).